Consider the following 802-residue polypeptide: MDADFRFDPDGSDDDGAAASAAAGRRKPAQSPWEFSSYAESVAAEHARRRTTSIDEKISQALSGSRRGGKPSIPDGDSEGDEDDSEVEDDSEEDDKEVVEGEIDDEEDEVEESEDDDEGVEVSDEEVEELEEGKGEEKSDEVEEGEEGQDGEEEEKEEGDEEAAEEEEETDKKSGVVDPSKFFASSEGASFHANSFLELNLSRPLLRACEALGYQKPTPIQAACIPLALTGRDICGSAITGSGKTAAFSLPVLERLLFRPKRVPAIRVLILTPTRELAAQVHSMIEKLAQFTDIRCCLIVGGLSTKVQEVALRSMPDIVVATPGRIIDHLRNSLSVGLEDLAILILDEADRLLELGFSAEIQELIRMCPRRRQTMLFSATMTEEINELVTLSLNKPVRLEADPSLKRPATLTEEVVRIRRAREANQEAVLLALCLKTFKDKVIIFSGTKHSAHRLKIIFGLSGMKAAELHGNLTQAQRLEALELFKKQEVDFLIATDVAARGIDIVGVRTVINFSCPRDARTYLHRVGRTARAGREGYAVTFVTDDDRSLLKAIAKKAGSQLKSRIVAEKPVAECAKLIEELEDQISTIIQEEREERILRKAEMEATKAENMIAHKDEIYSRPKRTWFATEKEKKLLAKAAKESTSQGKSNSGVISAQQAEDLRLKEKKRREREKNLPRKKRRRLEAEREMLEDESEDEEEAKESKGGKKEKKGQSLVDVAYRRAKSMKASGKRGAGTGKGKNDKKAKQHSGKGPTRQEEMQELFQNDMSEWKQGRSLKKNNVMRKKSKNSFKSKSRYNRRK.

The interval 1 to 179 (MDADFRFDPD…TDKKSGVVDP (179 aa)) is disordered. Composition is skewed to acidic residues over residues 76–131 (GDSE…EELE) and 138–169 (KSDEVEEGEEGQDGEEEEKEEGDEEAAEEEEE). 2 coiled-coil regions span residues 90–122 (DSEEDDKEVVEGEIDDEEDEVEESEDDDEGVEV) and 149–174 (QDGEEEEKEEGDEEAAEEEEETDKKS). The Q motif signature appears at 194–222 (NSFLELNLSRPLLRACEALGYQKPTPIQA). Positions 225 to 399 (IPLALTGRDI…TLSLNKPVRL (175 aa)) constitute a Helicase ATP-binding domain. 238–245 (AITGSGKT) contributes to the ATP binding site. A DEAD box motif is present at residues 347-350 (DEAD). Residues 429–573 (VLLALCLKTF…SRIVAEKPVA (145 aa)) form the Helicase C-terminal domain. Residues 572–616 (VAECAKLIEELEDQISTIIQEEREERILRKAEMEATKAENMIAHK) are a coiled coil. The disordered stretch occupies residues 639 to 802 (KAAKESTSQG…KSKSRYNRRK (164 aa)). Polar residues predominate over residues 644–659 (STSQGKSNSGVISAQQ). A compositionally biased stretch (basic residues) spans 666-684 (KEKKRREREKNLPRKKRRR). Positions 671 to 712 (REREKNLPRKKRRRLEAEREMLEDESEDEEEAKESKGGKKEK) form a coiled coil. Residues 691 to 702 (MLEDESEDEEEA) show a composition bias toward acidic residues. Basic residues predominate over residues 776 to 802 (RSLKKNNVMRKKSKNSFKSKSRYNRRK).

It belongs to the DEAD box helicase family. DDX27/DRS1 subfamily.

It catalyses the reaction ATP + H2O = ADP + phosphate + H(+). The polypeptide is DEAD-box ATP-dependent RNA helicase 28 (Oryza sativa subsp. japonica (Rice)).